The primary structure comprises 34 residues: Photosystem II reaction center protein T (34 aa).

A helical membrane pass occupies residues 3-23 (ALVYTFLLVSTLGIIFFAIFF).

Belongs to the PsbT family. As to quaternary structure, PSII is composed of 1 copy each of membrane proteins PsbA, PsbB, PsbC, PsbD, PsbE, PsbF, PsbH, PsbI, PsbJ, PsbK, PsbL, PsbM, PsbT, PsbY, PsbZ, Psb30/Ycf12, at least 3 peripheral proteins of the oxygen-evolving complex and a large number of cofactors. It forms dimeric complexes.

It localises to the plastid. The protein localises to the chloroplast thylakoid membrane. Found at the monomer-monomer interface of the photosystem II (PS II) dimer, plays a role in assembly and dimerization of PSII. PSII is a light-driven water plastoquinone oxidoreductase, using light energy to abstract electrons from H(2)O, generating a proton gradient subsequently used for ATP formation. The sequence is that of Photosystem II reaction center protein T from Atropa belladonna (Belladonna).